The chain runs to 262 residues: S-methyl-5'-thioadenosine phosphorylase (262 aa).

Phosphate contacts are provided by residues S12, 54–55, and 87–88; these read RH and SA. M185 provides a ligand contact to substrate. T186 lines the phosphate pocket. Residue 209–211 participates in substrate binding; that stretch reads DYD.

Belongs to the PNP/MTAP phosphorylase family. MTAP subfamily. In terms of assembly, homohexamer. Dimer of a homotrimer.

The catalysed reaction is S-methyl-5'-thioadenosine + phosphate = 5-(methylsulfanyl)-alpha-D-ribose 1-phosphate + adenine. It functions in the pathway amino-acid biosynthesis; L-methionine biosynthesis via salvage pathway; S-methyl-5-thio-alpha-D-ribose 1-phosphate from S-methyl-5'-thioadenosine (phosphorylase route): step 1/1. In terms of biological role, catalyzes the reversible phosphorylation of S-methyl-5'-thioadenosine (MTA) to adenine and 5-methylthioribose-1-phosphate. Involved in the breakdown of MTA, a major by-product of polyamine biosynthesis. Responsible for the first step in the methionine salvage pathway after MTA has been generated from S-adenosylmethionine. Has broad substrate specificity with 6-aminopurine nucleosides as preferred substrates. This Thermofilum pendens (strain DSM 2475 / Hrk 5) protein is S-methyl-5'-thioadenosine phosphorylase.